A 145-amino-acid polypeptide reads, in one-letter code: Ribosomal RNA large subunit methyltransferase H (145 aa).

S-adenosyl-L-methionine contacts are provided by residues leucine 62, glycine 94, and 113–118 (LGQLTL).

This sequence belongs to the RNA methyltransferase RlmH family. As to quaternary structure, homodimer.

The protein localises to the cytoplasm. It catalyses the reaction pseudouridine(1915) in 23S rRNA + S-adenosyl-L-methionine = N(3)-methylpseudouridine(1915) in 23S rRNA + S-adenosyl-L-homocysteine + H(+). Functionally, specifically methylates the pseudouridine at position 1915 (m3Psi1915) in 23S rRNA. This Deinococcus deserti (strain DSM 17065 / CIP 109153 / LMG 22923 / VCD115) protein is Ribosomal RNA large subunit methyltransferase H.